A 63-amino-acid polypeptide reads, in one-letter code: Small ribosomal subunit protein bS21 (63 aa).

This sequence belongs to the bacterial ribosomal protein bS21 family.

The chain is Small ribosomal subunit protein bS21 from Phocaeicola vulgatus (strain ATCC 8482 / DSM 1447 / JCM 5826 / CCUG 4940 / NBRC 14291 / NCTC 11154) (Bacteroides vulgatus).